The sequence spans 420 residues: Alpha-ketoglutarate-dependent xanthine dioxygenase xan-1 (420 aa).

The Fe cation site is built by His157 and Asp159. Thr206 and Trp336 together coordinate 2-oxoglutarate. His351 is a binding site for Fe cation. Arg366 contacts 2-oxoglutarate. Position 366 (Arg366) interacts with substrate.

The protein belongs to the TfdA dioxygenase family. Fe(2+) serves as cofactor.

It is found in the cytoplasm. Its subcellular location is the cytosol. It catalyses the reaction xanthine + 2-oxoglutarate + O2 = urate + succinate + CO2. Functionally, alpha-ketoglutarate-dependent xanthine dioxygenase is a non-heme mononuclear Fe(2+) enzyme that decarboxylates alpha-ketoglutarate to succinate and CO(2) while hydroxylating xanthine to generate uric acid. Allows xanthine utilization as a nitrogen source. The polypeptide is Alpha-ketoglutarate-dependent xanthine dioxygenase xan-1 (Neurospora crassa (strain ATCC 24698 / 74-OR23-1A / CBS 708.71 / DSM 1257 / FGSC 987)).